The sequence spans 421 residues: Nuclear speckle RNA-binding protein B (421 aa).

Disordered regions lie at residues 1 to 64 (MDNR…VNIY), 86 to 114 (TGQT…MVDT), and 197 to 226 (TDPQ…GIPH). A compositionally biased stretch (pro residues) spans 33 to 44 (PLAPPHPQPQPP). Residues 89–103 (TSTSTTSSSSSSSTS) are compositionally biased toward low complexity. The RRM domain maps to 323–409 (NTLYVEGLPS…KILRLQFFRN (87 aa)).

As to expression, isoform 1: Expressed in root meristems, lateral root primordia, root vascular tissues and cotyledon vascular tissues. Isoform 2: Expressed in root meristems, lateral root primordia and root vascular tissues.

Its subcellular location is the nucleus speckle. In terms of biological role, alternative splicing (AS) regulator that binds to specific mRNAs and modulates auxin effects on the transcriptome. Displaced from its targets upon binding to AS competitor long non-coding RNA (ASCO-RNA). This chain is Nuclear speckle RNA-binding protein B, found in Arabidopsis thaliana (Mouse-ear cress).